The sequence spans 138 residues: Transcription antitermination protein NusB (138 aa).

The protein belongs to the NusB family.

Functionally, involved in transcription antitermination. Required for transcription of ribosomal RNA (rRNA) genes. Binds specifically to the boxA antiterminator sequence of the ribosomal RNA (rrn) operons. This chain is Transcription antitermination protein NusB, found in Coxiella burnetii (strain CbuK_Q154) (Coxiella burnetii (strain Q154)).